The sequence spans 97 residues: Integration host factor subunit beta (97 aa).

Belongs to the bacterial histone-like protein family. Heterodimer of an alpha and a beta chain.

Functionally, this protein is one of the two subunits of integration host factor, a specific DNA-binding protein that functions in genetic recombination as well as in transcriptional and translational control. The sequence is that of Integration host factor subunit beta from Buchnera aphidicola subsp. Cinara cedri (strain Cc).